The following is a 107-amino-acid chain: Phosphoribosyl-ATP pyrophosphatase (107 aa).

It belongs to the PRA-PH family.

It localises to the cytoplasm. It catalyses the reaction 1-(5-phospho-beta-D-ribosyl)-ATP + H2O = 1-(5-phospho-beta-D-ribosyl)-5'-AMP + diphosphate + H(+). Its pathway is amino-acid biosynthesis; L-histidine biosynthesis; L-histidine from 5-phospho-alpha-D-ribose 1-diphosphate: step 2/9. This Caulobacter sp. (strain K31) protein is Phosphoribosyl-ATP pyrophosphatase.